A 425-amino-acid chain; its full sequence is GPI mannosyltransferase 1 (425 aa).

Helical transmembrane passes span 11–31, 85–105, 144–164, 166–186, 233–253, 295–315, 340–360, 367–387, and 398–418; these read VIGASIALRAVLLVYGAWQDA, FFAFGKALFALADVVAGWLIA, LLGVLVVGLLWAVLSRRVSLA, VILGLGVHFKIYPFIYGPAVV, IHLTLVALATFSALNVSMYIL, FESLAFIPQLLLSVVVIPLVL, SQYFLWYLIFLPFYLPSSSLM, ILVGLLWVIAQALWLQQGYNL, and GLFLASLFFFAVNVWILGIIV.

This sequence belongs to the PIGM family.

The protein resides in the endoplasmic reticulum membrane. The protein operates within glycolipid biosynthesis; glycosylphosphatidylinositol-anchor biosynthesis. Functionally, mannosyltransferase involved in glycosylphosphatidylinositol-anchor biosynthesis. Transfers the first alpha-1,4-mannose to GlcN-acyl-PI during GPI precursor assembly. Required for cell wall integrity. The chain is GPI mannosyltransferase 1 (gpi14) from Aspergillus fumigatus (strain ATCC MYA-4609 / CBS 101355 / FGSC A1100 / Af293) (Neosartorya fumigata).